A 350-amino-acid chain; its full sequence is Dihydroorotate dehydrogenase (quinone) (350 aa).

Residues Ala59–Lys63 and Thr83 contribute to the FMN site. Substrate is bound at residue Lys63. Asn108–Phe112 serves as a coordination point for substrate. FMN-binding residues include Asn136 and Asn169. Asn169 contacts substrate. The Nucleophile role is filled by Ser172. Asn174 contributes to the substrate binding site. 2 residues coordinate FMN: Lys214 and Thr242. Asn243–Thr244 lines the substrate pocket. Residues Gly265, Gly294, and Tyr315 to Ser316 contribute to the FMN site.

It belongs to the dihydroorotate dehydrogenase family. Type 2 subfamily. Monomer. FMN is required as a cofactor.

It localises to the cell membrane. It carries out the reaction (S)-dihydroorotate + a quinone = orotate + a quinol. The protein operates within pyrimidine metabolism; UMP biosynthesis via de novo pathway; orotate from (S)-dihydroorotate (quinone route): step 1/1. Catalyzes the conversion of dihydroorotate to orotate with quinone as electron acceptor. The sequence is that of Dihydroorotate dehydrogenase (quinone) from Aromatoleum aromaticum (strain DSM 19018 / LMG 30748 / EbN1) (Azoarcus sp. (strain EbN1)).